Consider the following 411-residue polypeptide: Nuclear receptor subfamily 2 group F member 1-A (411 aa).

Residues 1–68 (MAMVVSVWRD…AGDKGSQNSG (68 aa)) form a disordered region. Residues 24 to 46 (NPAAQPAREQQQAASAAPHTPQT) show a composition bias toward low complexity. Positions 73–148 (HIECVVCGDK…VGMRREAVQR (76 aa)) form a DNA-binding region, nuclear receptor. NR C4-type zinc fingers lie at residues 76–96 (CVVC…CEGC) and 112–136 (CRAN…LKKC). An NR LBD domain is found at 174 to 400 (YLSGYISLLL…TLIRDMLLSG (227 aa)).

The protein belongs to the nuclear hormone receptor family. NR2 subfamily. In terms of tissue distribution, first expressed in 11-12 hour embryos. In the rostral brain of 13 hour embryos, expressed within the anterior half of the midbrain and the posterior part of the diencephalon. In the presumptive hindbrain, expressed in a segment-like stripe in the anterior region, resembling the presumptive rhombomere units of the hindbrain. Also detected in the intermediate mesoderm, posterior to the first somite. As somitogenesis proceeds, expression extends posteriorly and flanks the 10 most anterior somites. Expression changes extensively both in level and expansion of domains between 13 and 20 hours. In the rostral brain, expression extends to include a major part of the diencephalon and a caudal portion of the telencephalon. Within the hindbrain, strongly expressed in the two most anterior rhombomeres, and a lower but uniform expression is seen to extend throughout rhombomere 7. In 28 hour embryos, higher and more uniform expression is seen in both rostral and hindbrain areas. Also expressed in the retina of the eye.

The protein resides in the nucleus. Functionally, putative transcription factor that is required in photoreceptor cells precursors during eye development. This is Nuclear receptor subfamily 2 group F member 1-A (nr2f1a) from Danio rerio (Zebrafish).